The following is a 247-amino-acid chain: NH(3)-dependent NAD(+) synthetase (247 aa).

29 to 36 is a binding site for ATP; that stretch reads GISGGIDS. Asp-35 provides a ligand contact to Mg(2+). Arg-120 provides a ligand contact to deamido-NAD(+). Thr-140 lines the ATP pocket. Residue Glu-145 coordinates Mg(2+). Residues Lys-153 and Asp-160 each contribute to the deamido-NAD(+) site. Lys-169 and Ser-191 together coordinate ATP. 237–238 is a deamido-NAD(+) binding site; the sequence is HK.

The protein belongs to the NAD synthetase family. Homodimer.

It carries out the reaction deamido-NAD(+) + NH4(+) + ATP = AMP + diphosphate + NAD(+) + H(+). It participates in cofactor biosynthesis; NAD(+) biosynthesis; NAD(+) from deamido-NAD(+) (ammonia route): step 1/1. Functionally, catalyzes the ATP-dependent amidation of deamido-NAD to form NAD. Uses ammonia as a nitrogen source. The sequence is that of NH(3)-dependent NAD(+) synthetase from Alkaliphilus metalliredigens (strain QYMF).